A 358-amino-acid chain; its full sequence is Methylthioribose-1-phosphate isomerase (358 aa).

Residues 54–56 (CGA) and Gln-205 contribute to the substrate site. Residue Asp-246 is the Proton donor of the active site. 256-257 (NQ) is a substrate binding site.

This sequence belongs to the eIF-2B alpha/beta/delta subunits family. MtnA subfamily.

The enzyme catalyses 5-(methylsulfanyl)-alpha-D-ribose 1-phosphate = 5-(methylsulfanyl)-D-ribulose 1-phosphate. The protein operates within amino-acid biosynthesis; L-methionine biosynthesis via salvage pathway; L-methionine from S-methyl-5-thio-alpha-D-ribose 1-phosphate: step 1/6. Its function is as follows. Catalyzes the interconversion of methylthioribose-1-phosphate (MTR-1-P) into methylthioribulose-1-phosphate (MTRu-1-P). In Pseudomonas fluorescens (strain ATCC BAA-477 / NRRL B-23932 / Pf-5), this protein is Methylthioribose-1-phosphate isomerase.